The chain runs to 744 residues: Prestin (744 aa).

The Cytoplasmic portion of the chain corresponds to 1-75; sequence MDHAEENEIL…PITKWLPAYK (75 aa). A helical transmembrane segment spans residues 76–105; that stretch reads FKEYVLGDLVSGISTGVLQLPQGLAFAMLA. Residues 106-108 are Extracellular-facing; sequence AVP. Residues 109–126 traverse the membrane as a helical segment; the sequence is PIFGLYSSFYPVIMYCFL. Topologically, residues 127–137 are cytoplasmic; the sequence is GTSRHISIGPF. A helical membrane pass occupies residues 138–151; sequence AVISLMIGGVAVRL. Over 152–168 the chain is Extracellular; it reads VPDDIVIPGGVNATNGT. The Involved in motor function signature appears at 158–168; that stretch reads IPGGVNATNGT. Residues Asn-163 and Asn-166 are each glycosylated (N-linked (GlcNAc...) asparagine). Residues 169-196 traverse the membrane as a helical segment; the sequence is EARDALRVKVAMSVTLLSGIIQFCLGVC. The Cytoplasmic portion of the chain corresponds to 197–206; that stretch reads RFGFVAIYLT. The helical transmembrane segment at 207-230 threads the bilayer; it reads EPLVRGFTTAAAVHVFTSMLKYLF. The Extracellular segment spans residues 231 to 241; it reads GVKTKRYSGIF. Residues 242-253 constitute an intramembrane region (helical); sequence SVVYSTVAVLQN. At 254–258 the chain is on the extracellular side; sequence VKNLN. The chain crosses the membrane as a helical span at residues 259-282; the sequence is VCSLGVGLMVFGLLLGGKEFNERF. Over 283–291 the chain is Cytoplasmic; it reads KEKLPAPIP. Residues 292 to 307 traverse the membrane as a helical segment; the sequence is LEFFAVVMGTGISAGF. Over 308–332 the chain is Extracellular; it reads NLKESYNVDVVGTLPLGLLPPANPD. Residues 333-367 form a helical membrane-spanning segment; sequence TSLFHLVYVDAIAIAIVGFSVTISMAKTLANKHGY. Over 368–370 the chain is Cytoplasmic; it reads QVD. Residues 371-388 form a helical membrane-spanning segment; it reads GNQELIALGLCNSIGSLF. At 389–396 the chain is on the extracellular side; that stretch reads QTFSISCS. The chain crosses the membrane as a helical span at residues 397-406; sequence LSRSLVQEGT. A salicylate-binding site is contributed by Ser-398. Residues 407–410 are Cytoplasmic-facing; sequence GGKT. A helical membrane pass occupies residues 411–432; sequence QLAGCLASLMILLVILATGFLF. Residues 433–436 lie on the Extracellular side of the membrane; sequence ESLP. A helical membrane pass occupies residues 437-464; it reads QAVLSAIVIVNLKGMFMQFSDLPFFWRT. A topological domain (cytoplasmic) is located at residue Ser-465. Residues 466-481 traverse the membrane as a helical segment; that stretch reads KIELTIWLTTFVSSLF. At 482–483 the chain is on the extracellular side; sequence LG. The helical transmembrane segment at 484 to 504 threads the bilayer; that stretch reads LDYGLITAVIIALLTVIYRTQ. Residues 505–718 form an extended region for STAS domain region; it reads SPSYKVLGKL…AVLGSQLREA (214 aa). The Cytoplasmic segment spans residues 505 to 744; it reads SPSYKVLGKL…PNATPATPEA (240 aa). Positions 525–713 constitute an STAS domain; sequence AYEEVKEIPG…HSIHDAVLGS (189 aa). The disordered stretch occupies residues 718-744; sequence ALAEQEASAPPSQEDLEPNATPATPEA.

It belongs to the SLC26A/SulP transporter (TC 2.A.53) family. As to quaternary structure, homodimer. Interacts (via STAS domain) with CALM; this interaction is calcium-dependent and the STAS domain interacts with only one lobe of CALM which is an elongated conformation. Interacts with MYH1.

Its subcellular location is the lateral cell membrane. It catalyses the reaction 2 hydrogencarbonate(in) + chloride(out) = 2 hydrogencarbonate(out) + chloride(in). Its function is as follows. Voltage-sensitive motor protein that drives outer hair cell (OHC) electromotility (eM) and participates in sound amplification in the hearing organ. Converts changes in the transmembrane electric potential into mechanical displacements resulting in the coupling of its expansion to movement of a charged voltage sensor across the lipid membrane. The nature of the voltage sensor is not completely clear, and two models compete. In the first model, acts as an incomplete transporter where intracellular chloride anion acts as extrinsic voltage sensor that drives conformational change in the protein which is sufficient to produce a length change in the plane of the membrane and hence in the length of the OHC. The second model in which multiple charged amino acid residues are distributed at the intracellular and extracellular membrane interfaces that form an intrinsic voltage sensor, whose movement produces the non-linear capacitance (NLC). However, the effective voltage sensor may be the result of a hybrid voltage sensor, assembled from intrinsic charge (charged residues) and extrinsic charge (bound anion). Notably, binding of anions to the anion-binding pocket partially neutralizes the intrinsic positive charge rather than to form an electrically negative sensor, therefore remaining charge may serve as voltage sensor that, after depolarization, moves from down (expanded state) to up (contracted) conformation, which is accompanied by an eccentric contraction of the intermembrane cross-sectional area of the protein as well as a major increase in the hydrophobic thickness of the protein having as consequences the plasma membrane thickening and the cell contraction after membrane depolarization. The anion-binding pocket transits from the inward-open (Down) state, where it is exposed toward the intracellular solvent in the absence of anion, to the occluded (Up) state upon anion binding. Salicylate competes for the anion-binding site and inhibits the voltage-sensor movement, and therefore inhibits the charge transfer and electromotility by displacing Cl(-) from the anion-binding site and by preventing the structural transitions to the contracted state. In addition, can act as a weak Cl(-)/HCO3(-) antiporter across the cell membrane and so regulate the intracellular pH of the outer hair cells (OHCs), while firstly found as being unable to mediate electrogenic anion transport. Moreover, supports a role in cardiac mechanical amplification serving as an elastic element to enhance the actomyosin- based sarcomere contraction system. This Homo sapiens (Human) protein is Prestin.